Consider the following 106-residue polypeptide: Translation initiation factor 1A 2 (106 aa).

The segment at 1-24 is disordered; it reads MRKRREGTANNSPTPEVTRVRTPR. The region spanning 18-92 is the S1-like domain; that stretch reads TRVRTPRKEN…SKADVIWKYT (75 aa).

Belongs to the eIF-1A family.

In terms of biological role, seems to be required for maximal rate of protein biosynthesis. Enhances ribosome dissociation into subunits and stabilizes the binding of the initiator Met-tRNA(I) to 40 S ribosomal subunits. This Methanosarcina mazei (strain ATCC BAA-159 / DSM 3647 / Goe1 / Go1 / JCM 11833 / OCM 88) (Methanosarcina frisia) protein is Translation initiation factor 1A 2 (eIF1A2).